The primary structure comprises 874 residues: Alanine--tRNA ligase (874 aa).

The Zn(2+) site is built by His564, His568, Cys665, and His669.

The protein belongs to the class-II aminoacyl-tRNA synthetase family. The cofactor is Zn(2+).

The protein resides in the cytoplasm. It carries out the reaction tRNA(Ala) + L-alanine + ATP = L-alanyl-tRNA(Ala) + AMP + diphosphate. Catalyzes the attachment of alanine to tRNA(Ala) in a two-step reaction: alanine is first activated by ATP to form Ala-AMP and then transferred to the acceptor end of tRNA(Ala). Also edits incorrectly charged Ser-tRNA(Ala) and Gly-tRNA(Ala) via its editing domain. The chain is Alanine--tRNA ligase from Burkholderia lata (strain ATCC 17760 / DSM 23089 / LMG 22485 / NCIMB 9086 / R18194 / 383).